We begin with the raw amino-acid sequence, 329 residues long: DNA-directed RNA polymerase subunit alpha (329 aa).

Positions 1–235 (MQGSVTEFLK…EQLDAFVDLR (235 aa)) are alpha N-terminal domain (alpha-NTD). Residues 249 to 329 (FDPILLRPVD…NWPPASIAED (81 aa)) are alpha C-terminal domain (alpha-CTD).

This sequence belongs to the RNA polymerase alpha chain family. In terms of assembly, homodimer. The RNAP catalytic core consists of 2 alpha, 1 beta, 1 beta' and 1 omega subunit. When a sigma factor is associated with the core the holoenzyme is formed, which can initiate transcription.

It catalyses the reaction RNA(n) + a ribonucleoside 5'-triphosphate = RNA(n+1) + diphosphate. Functionally, DNA-dependent RNA polymerase catalyzes the transcription of DNA into RNA using the four ribonucleoside triphosphates as substrates. The protein is DNA-directed RNA polymerase subunit alpha of Photobacterium profundum (strain SS9).